A 363-amino-acid polypeptide reads, in one-letter code: 1-aminocyclopropane-1-carboxylate oxidase homolog (363 aa).

In terms of domain architecture, Fe2OG dioxygenase spans 212–312 (FHLFCSCNYY…MSITCFFGES (101 aa)). Fe cation contacts are provided by His-236, Asp-238, and His-292.

Belongs to the iron/ascorbate-dependent oxidoreductase family.

The polypeptide is 1-aminocyclopropane-1-carboxylate oxidase homolog (ACO3) (Solanum lycopersicum (Tomato)).